Consider the following 100-residue polypeptide: UPF0213 protein YhbQ (100 aa).

A GIY-YIG domain is found at 2-77 (TPWFLYLIRT…KQLTKRQKER (76 aa)).

The protein belongs to the UPF0213 family.

The sequence is that of UPF0213 protein YhbQ from Escherichia coli O157:H7.